A 189-amino-acid chain; its full sequence is UPF0301 protein PSEEN5058 (189 aa).

Belongs to the UPF0301 (AlgH) family.

The polypeptide is UPF0301 protein PSEEN5058 (Pseudomonas entomophila (strain L48)).